A 393-amino-acid polypeptide reads, in one-letter code: Chorismate synthase (393 aa).

NADP(+) contacts are provided by arginine 40 and arginine 46. Residues arginine 135–serine 137, glutamine 257–alanine 258, glycine 301, lysine 316–threonine 320, and arginine 342 each bind FMN. The disordered stretch occupies residues aspartate 280–glycine 306.

Belongs to the chorismate synthase family. In terms of assembly, homotetramer. FMNH2 is required as a cofactor.

The catalysed reaction is 5-O-(1-carboxyvinyl)-3-phosphoshikimate = chorismate + phosphate. It participates in metabolic intermediate biosynthesis; chorismate biosynthesis; chorismate from D-erythrose 4-phosphate and phosphoenolpyruvate: step 7/7. Functionally, catalyzes the anti-1,4-elimination of the C-3 phosphate and the C-6 proR hydrogen from 5-enolpyruvylshikimate-3-phosphate (EPSP) to yield chorismate, which is the branch point compound that serves as the starting substrate for the three terminal pathways of aromatic amino acid biosynthesis. This reaction introduces a second double bond into the aromatic ring system. This Thermobifida fusca (strain YX) protein is Chorismate synthase.